The sequence spans 193 residues: Potassium-transporting ATPase KdpC subunit (193 aa).

Residues 14-34 (ITFTFLVLCGLVYPLIVTGIA) traverse the membrane as a helical segment.

It belongs to the KdpC family. In terms of assembly, the system is composed of three essential subunits: KdpA, KdpB and KdpC.

The protein resides in the cell membrane. Its function is as follows. Part of the high-affinity ATP-driven potassium transport (or Kdp) system, which catalyzes the hydrolysis of ATP coupled with the electrogenic transport of potassium into the cytoplasm. This subunit acts as a catalytic chaperone that increases the ATP-binding affinity of the ATP-hydrolyzing subunit KdpB by the formation of a transient KdpB/KdpC/ATP ternary complex. In Bacillus mycoides (strain KBAB4) (Bacillus weihenstephanensis), this protein is Potassium-transporting ATPase KdpC subunit.